Here is a 281-residue protein sequence, read N- to C-terminus: tRNA uridine(34) hydroxylase (281 aa).

The region spanning 121 to 214 (SQPDVLVIDT…YLEKTHNKSG (94 aa)) is the Rhodanese domain. Catalysis depends on C174, which acts as the Cysteine persulfide intermediate.

It belongs to the TrhO family.

The catalysed reaction is uridine(34) in tRNA + AH2 + O2 = 5-hydroxyuridine(34) in tRNA + A + H2O. Catalyzes oxygen-dependent 5-hydroxyuridine (ho5U) modification at position 34 in tRNAs. The sequence is that of tRNA uridine(34) hydroxylase from Wolbachia pipientis subsp. Culex pipiens (strain wPip).